The following is a 79-amino-acid chain: Small ribosomal subunit protein bS16 (79 aa).

It belongs to the bacterial ribosomal protein bS16 family.

This is Small ribosomal subunit protein bS16 from Buchnera aphidicola subsp. Acyrthosiphon pisum (strain 5A).